Here is a 554-residue protein sequence, read N- to C-terminus: Potassium-transporting ATPase potassium-binding subunit (554 aa).

The next 12 helical transmembrane spans lie at 3–23, 60–80, 131–151, 174–194, 252–272, 279–299, 323–343, 352–372, 375–395, 412–432, 481–501, and 522–542; these read PVLA…LAHV, PAYL…LYLL, GLAV…VALV, VRVL…CGVI, LFEI…FGIM, GYAI…LMMW, FGIG…TGAV, GLGG…PGGV, GLYG…LMVG, FAAC…AAAM, LGLA…ALAG, and LFAG…YFPA.

It belongs to the KdpA family. The system is composed of three essential subunits: KdpA, KdpB and KdpC.

It is found in the cell membrane. Functionally, part of the high-affinity ATP-driven potassium transport (or Kdp) system, which catalyzes the hydrolysis of ATP coupled with the electrogenic transport of potassium into the cytoplasm. This subunit binds the extracellular potassium ions and delivers the ions to the membrane domain of KdpB through an intramembrane tunnel. The chain is Potassium-transporting ATPase potassium-binding subunit from Streptomyces coelicolor (strain ATCC BAA-471 / A3(2) / M145).